Here is a 358-residue protein sequence, read N- to C-terminus: Gibberellin 2-beta-dioxygenase 6 (358 aa).

The region spanning 207-308 (DETTCFLRLN…RLSVAYFLCP (102 aa)) is the Fe2OG dioxygenase domain. Tyrosine 218 serves as a coordination point for 2-oxoglutarate. Fe cation is bound by residues histidine 233, aspartate 235, and histidine 289. Residues arginine 299 and serine 301 each contribute to the 2-oxoglutarate site.

This sequence belongs to the iron/ascorbate-dependent oxidoreductase family. GA2OX subfamily. Requires L-ascorbate as cofactor. It depends on Fe(2+) as a cofactor. Expressed in panicles. Expressed at low levels in young shoots, leaf blades and elongating internodes.

It localises to the cytoplasm. The protein resides in the nucleus. It carries out the reaction gibberellin A1 + 2-oxoglutarate + O2 = gibberellin A8 + succinate + CO2. In terms of biological role, catalyzes the 2-beta-hydroxylation of several biologically active gibberellins, leading to the homeostatic regulation of their endogenous level. Catabolism of gibberellins (GAs) plays a central role in plant development. In vitro, converts GA12 and GA53 to the corresponding 2-beta-hydroxylated products GA110 and GA97, respectively. In Oryza sativa subsp. japonica (Rice), this protein is Gibberellin 2-beta-dioxygenase 6.